We begin with the raw amino-acid sequence, 129 residues long: Follitropin subunit beta (129 aa).

An N-terminal signal peptide occupies residues 1–20; that stretch reads MKSVQLCFLFCCWRAICCKS. Disulfide bonds link cysteine 21/cysteine 69, cysteine 35/cysteine 84, cysteine 38/cysteine 122, cysteine 46/cysteine 100, cysteine 50/cysteine 102, and cysteine 105/cysteine 112. N-linked (GlcNAc...) asparagine glycans are attached at residues asparagine 25 and asparagine 42.

It belongs to the glycoprotein hormones subunit beta family. As to quaternary structure, heterodimer. The active follitropin is a heterodimer composed of an alpha chain/CGA shared with other hormones and a unique beta chain/FSHB shown here.

It localises to the secreted. In terms of biological role, together with the alpha chain CGA constitutes follitropin, the follicle-stimulating hormone, and provides its biological specificity to the hormone heterodimer. Binds FSHR, a G protein-coupled receptor, on target cells to activate downstream signaling pathways. Follitropin is involved in follicle development and spermatogenesis in reproductive organs. This chain is Follitropin subunit beta (FSHB), found in Ailuropoda melanoleuca (Giant panda).